Consider the following 410-residue polypeptide: Peptidase T (410 aa).

His-79 lines the Zn(2+) pocket. Asp-81 is an active-site residue. Asp-142 is a binding site for Zn(2+). The Proton acceptor role is filled by Glu-176. 3 residues coordinate Zn(2+): Glu-177, Asp-199, and His-381.

Belongs to the peptidase M20B family. Requires Zn(2+) as cofactor.

Its subcellular location is the cytoplasm. It carries out the reaction Release of the N-terminal residue from a tripeptide.. Functionally, cleaves the N-terminal amino acid of tripeptides. The protein is Peptidase T of Listeria monocytogenes serotype 4a (strain HCC23).